The primary structure comprises 234 residues: Sugar fermentation stimulation protein A (234 aa).

The H-T-H motif DNA-binding region spans 201-220; it reads LLSEAQQRGVEILAYKAEIS.

This sequence belongs to the SfsA family.

In terms of biological role, binds to DNA non-specifically. Could be a regulatory factor involved in maltose metabolism. In Shigella dysenteriae serotype 1 (strain Sd197), this protein is Sugar fermentation stimulation protein A.